A 484-amino-acid chain; its full sequence is MKFKQDFFTQLPEFYSQVYPQGISNPHWLAWSEDAAKLIDLQQPTDALLQGLSGNAAVEGASYYAQVYSGHQFGGYTPRLGDGRSIILGEALGPQGAWDVALKGGGPTPYSRHGDGRAVMRSAVREFLVSEALHHLGVPTTRALAVIGSDMPVWRESQETAAITVRLARSHIRFGHFEFFCHSERGQADKLTQLLNFTLKQHYPNLSCDLAGYKAWFLQVVQDTAKLIAHWQAIGFAHGVMNTDNMSILGDSFDFGPFAFLDTFQEDFICNHSDPEGRYAFGQQPGIGLWNLQRLAQALTPVIPSDDLIAALNQYQHALVQHYLMLMRVKLGLTERADSTAEQDQQDLELIGRFTVLMEKNQLDYSNTWRRFGQLDPSSAHSSLRDDFIDLNEFDAWYQAYQARLGKVTDIEAWQQARNSVNPKYILRNYLAQEAIIAVEEGNLAPLERLHQVLRQPFAEQVEHEDLAKRPPDWGQGLIMSCSS.

Gly81, Gly83, Arg84, Lys103, Asp115, Gly116, Arg166, and Arg173 together coordinate ATP. The active-site Proton acceptor is Asp244. Positions 245 and 254 each coordinate Mg(2+). Asp254 serves as a coordination point for ATP.

This sequence belongs to the SELO family. Requires Mg(2+) as cofactor. Mn(2+) is required as a cofactor.

It carries out the reaction L-seryl-[protein] + ATP = 3-O-(5'-adenylyl)-L-seryl-[protein] + diphosphate. The enzyme catalyses L-threonyl-[protein] + ATP = 3-O-(5'-adenylyl)-L-threonyl-[protein] + diphosphate. It catalyses the reaction L-tyrosyl-[protein] + ATP = O-(5'-adenylyl)-L-tyrosyl-[protein] + diphosphate. The catalysed reaction is L-histidyl-[protein] + UTP = N(tele)-(5'-uridylyl)-L-histidyl-[protein] + diphosphate. It carries out the reaction L-seryl-[protein] + UTP = O-(5'-uridylyl)-L-seryl-[protein] + diphosphate. The enzyme catalyses L-tyrosyl-[protein] + UTP = O-(5'-uridylyl)-L-tyrosyl-[protein] + diphosphate. Its function is as follows. Nucleotidyltransferase involved in the post-translational modification of proteins. It can catalyze the addition of adenosine monophosphate (AMP) or uridine monophosphate (UMP) to a protein, resulting in modifications known as AMPylation and UMPylation. The chain is Protein nucleotidyltransferase YdiU from Shewanella sp. (strain MR-4).